We begin with the raw amino-acid sequence, 460 residues long: uncharacterized protein (460 aa).

The TRAM domain maps to 8–66 (PVEKNEFIDVVFEDLTHDGAGVAKVKGYPIFVKNGLPGEEAQIKIIKVKKNFAFGRLMK). [4Fe-4S] cluster-binding residues include cysteine 79, cysteine 85, cysteine 88, and cysteine 166. S-adenosyl-L-methionine-binding residues include glutamine 290, tyrosine 319, glutamate 340, and aspartate 388. Cysteine 415 acts as the Nucleophile in catalysis.

Belongs to the class I-like SAM-binding methyltransferase superfamily. RNA M5U methyltransferase family.

This is an uncharacterized protein from Bacillus cereus (strain ATCC 10987 / NRS 248).